Consider the following 257-residue polypeptide: UPF0246 protein CPS_4102 (257 aa).

Belongs to the UPF0246 family.

This chain is UPF0246 protein CPS_4102, found in Colwellia psychrerythraea (strain 34H / ATCC BAA-681) (Vibrio psychroerythus).